A 197-amino-acid chain; its full sequence is UPF0215 protein MK0057 (197 aa).

The protein belongs to the UPF0215 family.

In Methanopyrus kandleri (strain AV19 / DSM 6324 / JCM 9639 / NBRC 100938), this protein is UPF0215 protein MK0057.